Reading from the N-terminus, the 413-residue chain is Queuine tRNA-ribosyltransferase accessory subunit 2 (413 aa).

The interval 298–321 (LEKSETSGAERNGDVGAESEEPDA) is disordered. Residues Cys-349, Cys-351, Cys-354, and His-380 each contribute to the Zn(2+) site.

Belongs to the queuine tRNA-ribosyltransferase family. QTRT2 subfamily. Heterodimer of a catalytic subunit qtrt1 and an accessory subunit qtrt2. Zn(2+) is required as a cofactor.

The protein localises to the cytoplasm. It is found in the mitochondrion outer membrane. In terms of biological role, non-catalytic subunit of the queuine tRNA-ribosyltransferase (TGT) that catalyzes the base-exchange of a guanine (G) residue with queuine (Q) at position 34 (anticodon wobble position) in tRNAs with GU(N) anticodons (tRNA-Asp, -Asn, -His and -Tyr), resulting in the hypermodified nucleoside queuosine (7-(((4,5-cis-dihydroxy-2-cyclopenten-1-yl)amino)methyl)-7-deazaguanosine). This is Queuine tRNA-ribosyltransferase accessory subunit 2 from Xenopus tropicalis (Western clawed frog).